We begin with the raw amino-acid sequence, 282 residues long: 4-diphosphocytidyl-2-C-methyl-D-erythritol kinase (282 aa).

The active site involves Lys-12. Pro-95–Ser-105 provides a ligand contact to ATP. Asp-137 is an active-site residue.

This sequence belongs to the GHMP kinase family. IspE subfamily.

It carries out the reaction 4-CDP-2-C-methyl-D-erythritol + ATP = 4-CDP-2-C-methyl-D-erythritol 2-phosphate + ADP + H(+). It participates in isoprenoid biosynthesis; isopentenyl diphosphate biosynthesis via DXP pathway; isopentenyl diphosphate from 1-deoxy-D-xylulose 5-phosphate: step 3/6. In terms of biological role, catalyzes the phosphorylation of the position 2 hydroxy group of 4-diphosphocytidyl-2C-methyl-D-erythritol. This Pseudomonas paraeruginosa (strain DSM 24068 / PA7) (Pseudomonas aeruginosa (strain PA7)) protein is 4-diphosphocytidyl-2-C-methyl-D-erythritol kinase.